Reading from the N-terminus, the 366-residue chain is Alanine racemase (366 aa).

Catalysis depends on lysine 40, which acts as the Proton acceptor; specific for D-alanine. Lysine 40 carries the post-translational modification N6-(pyridoxal phosphate)lysine. Arginine 136 contributes to the substrate binding site. The Proton acceptor; specific for L-alanine role is filled by tyrosine 263. Methionine 310 contacts substrate.

The protein belongs to the alanine racemase family. Requires pyridoxal 5'-phosphate as cofactor.

It catalyses the reaction L-alanine = D-alanine. The protein operates within amino-acid biosynthesis; D-alanine biosynthesis; D-alanine from L-alanine: step 1/1. In terms of biological role, catalyzes the interconversion of L-alanine and D-alanine. May also act on other amino acids. The chain is Alanine racemase (alr) from Streptococcus agalactiae serotype Ia (strain ATCC 27591 / A909 / CDC SS700).